The sequence spans 243 residues: MRADGRLFDQLRNIKITPNVSEYAEGSAIVEFGRTKVLCTATYESKAPSWLLGTGAGWITAEYGMLPRSTHTRIRRDKSMTGGRTQEISRLIGRSLRAAVDLKQLGEKQIIIDCDVLNADGGTRTASVTGGFVALALALKKLHAVSEIKTLPLINYVSAISVGLHEGQILLDLNYDEDSAIGTDMNFVMTDKGQFVEVQGTAEHVPFTRDQLFKMMDVAEKGCRELFIHQASVMGEIYKIAGA.

Phosphate-binding positions include Arg84 and 122–124; that span reads GTR.

It belongs to the RNase PH family. As to quaternary structure, homohexameric ring arranged as a trimer of dimers.

The catalysed reaction is tRNA(n+1) + phosphate = tRNA(n) + a ribonucleoside 5'-diphosphate. Phosphorolytic 3'-5' exoribonuclease that plays an important role in tRNA 3'-end maturation. Removes nucleotide residues following the 3'-CCA terminus of tRNAs; can also add nucleotides to the ends of RNA molecules by using nucleoside diphosphates as substrates, but this may not be physiologically important. Probably plays a role in initiation of 16S rRNA degradation (leading to ribosome degradation) during starvation. This is Ribonuclease PH from Bdellovibrio bacteriovorus (strain ATCC 15356 / DSM 50701 / NCIMB 9529 / HD100).